An 859-amino-acid chain; its full sequence is ATP-dependent RNA helicase DDX24 (859 aa).

At K17 the chain carries N6-acetyllysine. Phosphoserine is present on S60. Residues 61–170 (PAKNPSSLFS…KGLEPSQSTA (110 aa)) form a disordered region. The residue at position 71 (K71) is an N6-acetyllysine. Phosphoserine is present on residues S82 and S94. Residues 94–105 (SPKKKIKLKKSK) are compositionally biased toward basic residues. The span at 106 to 115 (NVATEGTSTQ) shows a compositional bias: polar residues. Residues 125 to 139 (LEAQGDDMVCDDPEA) show a composition bias toward acidic residues. Residues 192–220 (SAWKDLFVPRPVLRALSFLGFSAPTPIQA) carry the Q motif motif. Residues 224–528 (APAIRDKLDI…RILHKKHTKK (305 aa)) form the Helicase ATP-binding domain. 237-244 (AETGSGKT) is a binding site for ATP. The interval 262–300 (NAAPPPSNTEAPPGETRTEAGAETRSPGKAEAESDALPD) is disordered. The span at 277–293 (TRTEAGAETRSPGKAEA) shows a compositional bias: basic and acidic residues. 2 positions are modified to phosphoserine: S287 and S295. Phosphothreonine is present on T302. Residues 326–376 (SDQALLFGDDDAGEGPSSLIREKPVPKQNENEEENLDKEQTGNLKQELDDK) are disordered. K370 participates in a covalent cross-link: Glycyl lysine isopeptide (Lys-Gly) (interchain with G-Cter in SUMO2). Positions 471 to 474 (DEAD) match the DEAD box motif. In terms of domain architecture, Helicase C-terminal spans 578-723 (YLYYFLMQYP…LFPVQTKYMD (146 aa)). Glycyl lysine isopeptide (Lys-Gly) (interchain with G-Cter in SUMO2) cross-links involve residues K624, K808, and K825. 2 stretches are compositionally biased toward polar residues: residues 799–814 (PLFT…TQSG) and 823–833 (PSKSESALSCL). A disordered region spans residues 799 to 859 (PLFTESQKTK…EQPQPSTSAN (61 aa)).

Belongs to the DEAD box helicase family. DDX24/MAK5 subfamily. As to quaternary structure, interacts with FADD. Interacts with RIPK1; this interaction disrupts RLR signaling activation of IFN-dependent transcription factor IRF7. Interacts with NIP7. Interacts with EP300; this interaction prevents TP53 acetylation mediated by EP300. (Microbial infection) Interacts with HIV-1 virus Gag and Rev proteins. Post-translationally, ubiquitinated by MDM2 without targeting DDX24 for proteasomal degradation. Instead, polyubiquitinated DDX24 promotes interaction with NIP7, a component of pre-rRNP processing complex, and associates with pre-rRNA molecules and pre-ribosomal particles. In terms of tissue distribution, ubiquitous. Most abundant in heart and brain, but with lowest levels in thymus and small intestine.

Its subcellular location is the cytoplasm. It is found in the nucleus. It carries out the reaction ATP + H2O = ADP + phosphate + H(+). Functionally, ATP-dependent RNA helicase that plays a role in various aspects of RNA metabolism including pre-mRNA splicing and is thereby involved in different biological processes such as cell cycle regulation or innate immunity. Plays an inhibitory role in TP53 transcriptional activity and subsequently in TP53 controlled cell growth arrest and senescence by inhibiting its EP300 mediated acetylation. Negatively regulates cytosolic RNA-mediated innate immune signaling at least in part by affecting RIPK1/IRF7 interactions. Alternatively, possesses antiviral activity by recognizing gammaherpesvirus transcripts in the context of lytic reactivation. Plays an essential role in cell cycle regulation in vascular smooth muscle cells by interacting with and regulating FANCA (Fanconi anemia complementation group A) mRNA. Its function is as follows. (Microbial infection) Plays a positive role in HIV-1 infection by promoting Rev-dependent nuclear export of viral RNAs and their packaging into virus particles. In Homo sapiens (Human), this protein is ATP-dependent RNA helicase DDX24 (DDX24).